The primary structure comprises 433 residues: CinA-like protein (433 aa).

This sequence belongs to the CinA family.

The polypeptide is CinA-like protein (Prochlorococcus marinus subsp. pastoris (strain CCMP1986 / NIES-2087 / MED4)).